The sequence spans 297 residues: MDQNNSIPPFQGLASPQGSLTPGINIFSPLMPYGTGLTPQPVQTTNSLSILEEQQRQQQQAQQSTSQQGNQGSGQTPQLFHPQTLTTAPLPGNTPLYPSPMTPMTPITPATPASESSGIVPQLQNIVSTVNLGCKLDLKTIALRARNAEYNPKRFAAVIMRIREPRTTALIFSSGKMVCTGAKSEEQSRLAARKYARVVQKLGFPAKFLDFKIQNMVGSCDVKFPIRLEGLVLTHQQFSSYEPELFPGLIYRMIKPRIVLLIFVSGKVVLTGAKVRAEIYEAFENIYPILKGFRKTT.

The disordered stretch occupies residues 52–116; sequence EEQQRQQQQA…ITPATPASES (65 aa). Composition is skewed to low complexity over residues 56–78 and 104–114; these read RQQQ…QTPQ and MTPITPATPAS. 2 tandem repeats follow at residues 123-199 and 213-290.

Belongs to the TBP family. As to quaternary structure, belongs to the TFIID complex together with the TBP-associated factors (TAFs). Binds DNA as monomer. In terms of processing, the N-terminal domain is extensively phosphorylated.

The protein resides in the nucleus. General transcription factor that functions at the core of the DNA-binding multiprotein factor TFIID. Binding of TFIID to the TATA box is the initial transcriptional step of the pre-initiation complex (PIC), playing a role in the activation of eukaryotic genes transcribed by RNA polymerase II. Members of the TBP family are differentially required to regulate transcription and development during early embryogenesis. Binds to the promoters of select genes. This chain is TATA-box-binding protein, found in Xenopus tropicalis (Western clawed frog).